The sequence spans 84 residues: Putative membrane protein insertion efficiency factor (84 aa).

Belongs to the UPF0161 family.

It is found in the cell inner membrane. Could be involved in insertion of integral membrane proteins into the membrane. The protein is Putative membrane protein insertion efficiency factor of Nostoc sp. (strain PCC 7120 / SAG 25.82 / UTEX 2576).